The following is a 348-amino-acid chain: Alcohol dehydrogenase 2 (348 aa).

Ser2 carries the post-translational modification N-acetylserine. Residues Cys44, His67, Cys98, Cys101, Cys104, Cys112, and Cys154 each contribute to the Zn(2+) site. Residues 178–184, Asp202, Lys207, 269–271, and Arg341 each bind NAD(+); these read GAAGGLG and VGL.

It belongs to the zinc-containing alcohol dehydrogenase family. In terms of assembly, homotetramer. It depends on Zn(2+) as a cofactor.

The protein resides in the cytoplasm. It catalyses the reaction a primary alcohol + NAD(+) = an aldehyde + NADH + H(+). The catalysed reaction is a secondary alcohol + NAD(+) = a ketone + NADH + H(+). In Kluyveromyces marxianus (Yeast), this protein is Alcohol dehydrogenase 2 (ADH2).